The sequence spans 138 residues: RutC family protein UK114 (138 aa).

The protein belongs to the RutC family.

Its function is as follows. Molecular chaperone. Seems to fulfill an ATP-independent, HSP70-like function in protein folding. May protect essential factors of cell proliferation during heat shock. No role in calpain activation. This is RutC family protein UK114 from Drosophila melanogaster (Fruit fly).